We begin with the raw amino-acid sequence, 285 residues long: Protease HtpX homolog (285 aa).

The next 2 membrane-spanning stretches (helical) occupy residues 7–27 and 30–50; these read TAMLMAAITALFIVIGGMIGG and GMTIALLFALGMNFFSYWFSD. Histidine 131 lines the Zn(2+) pocket. Glutamate 132 is an active-site residue. Histidine 135 provides a ligand contact to Zn(2+). 2 consecutive transmembrane segments (helical) span residues 146–166 and 177–197; these read ITATMAGAISAIANFAMFFGG and IAGIAVALLAPIAGALIQMAI. Glutamate 202 serves as a coordination point for Zn(2+).

Belongs to the peptidase M48B family. Zn(2+) serves as cofactor.

The protein localises to the cell inner membrane. In Burkholderia multivorans (strain ATCC 17616 / 249), this protein is Protease HtpX homolog.